The sequence spans 817 residues: Two pore calcium channel protein 1 (817 aa).

Residues Met-1–Tyr-101 lie on the Cytoplasmic side of the membrane. The segment at Pro-22 to His-66 is disordered. The helical transmembrane segment at Leu-102–Leu-122 threads the bilayer. Residues Leu-123 to Arg-137 lie on the Extracellular side of the membrane. Residues Thr-138–Met-158 traverse the membrane as a helical segment. Residues Lys-159–Lys-172 are Cytoplasmic-facing. Residues Arg-173 to Val-193 form a helical membrane-spanning segment. Over Arg-194–Thr-202 the chain is Extracellular. Residues Arg-203–Arg-221 traverse the membrane as a helical segment. Topologically, residues Asn-222–Asp-235 are cytoplasmic. A helical membrane pass occupies residues Ile-236–Ser-256. Residues Thr-257 to Tyr-263 are Extracellular-facing. Positions Phe-264–Met-287 form an intramembrane region, helical; Pore-forming. Topologically, residues Met-288–Cys-298 are extracellular. The chain crosses the membrane as a helical span at residues Val-299–Val-319. Over Val-320 to Gln-445 the chain is Cytoplasmic. The helical transmembrane segment at Tyr-446–Leu-466 threads the bilayer. Residues Lys-467–Tyr-480 lie on the Extracellular side of the membrane. The helical transmembrane segment at Leu-481 to Val-501 threads the bilayer. The Cytoplasmic segment spans residues Glu-502–Leu-504. A helical membrane pass occupies residues Ser-505–Thr-527. Topologically, residues Leu-528–Phe-535 are extracellular. The chain crosses the membrane as a helical span at residues Ile-536–Leu-550. Topologically, residues Lys-551–Thr-574 are cytoplasmic. The helical transmembrane segment at Leu-575 to Ser-595 threads the bilayer. Residues Pro-596 to Asn-630 are Extracellular-facing. The helical; Pore-forming intramembrane region spans Phe-631–Met-654. The Extracellular segment spans residues Glu-655–Thr-671. The chain crosses the membrane as a helical span at residues Phe-672–Val-692. The Cytoplasmic segment spans residues Phe-693–Thr-817. Residues Ser-770–Leu-794 adopt a coiled-coil conformation. The tract at residues His-785–Thr-817 is disordered. A compositionally biased stretch (polar residues) spans Ala-802–Thr-817.

It belongs to the calcium channel alpha-1 subunit (TC 1.A.1.11) family. Two pore calcium channel subfamily. As to quaternary structure, dimer. Interacts with MTOR; the interaction is required for TPCN1 ATP sensitivity. Interacts with STX7, STX8 and STX12. Interacts with JPT2. Found in a complex with LSM12, TPCN1 and TPCN2. In terms of processing, N-glycosylated. Widely expressed. Expressed at relatively high level in kidney, liver and lung, and in the kidney it is expressed at inner medullary collecting ducts.

It localises to the lysosome membrane. Its subcellular location is the endosome membrane. The protein resides in the early endosome membrane. It is found in the recycling endosome membrane. The catalysed reaction is Na(+)(in) = Na(+)(out). The enzyme catalyses Ca(2+)(in) = Ca(2+)(out). Na(+) current is inhibited by ATP in a MTORC-dependent manner. ATP sensitivity is independent of PI(3,5)P2. Probably regulated by Mg(2+) ions, cytosolic Mg(2+) selectively inhibits outward current while lysosomal Mg(2+) modestly inhibits both the outward and inward currents. In the absence of Mg(2+), NAADP readily activates TPCN2, with properties similar to PI(3,5)P2. Both current elicited by PI(3,5)P2 as well as NAADP are inhibited by tetrandrine. Its function is as follows. Intracellular channel initially characterized as a non-selective Ca(2+)-permeable channel activated by NAADP (nicotinic acid adenine dinucleotide phosphate), it is also a voltage-gated highly-selective Na(+) channel activated directly by PI(3,5)P2 (phosphatidylinositol 3,5-bisphosphate) that senses pH changes and confers electrical excitability to organelles. Localizes to the early and recycling endosomes membranes where it plays a role in the uptake and processing of proteins and regulates organellar membrane excitability, membrane trafficking and pH homeostasis. Ion selectivity is not fixed but rather agonist-dependent and under defined ionic conditions, can be readily activated by both NAADP and PI(3,5)P2. Required for mTOR-dependent nutrient sensing. The protein is Two pore calcium channel protein 1 (Tpcn1) of Rattus norvegicus (Rat).